Consider the following 547-residue polypeptide: Cytochrome P450 monooxygenase fsoD (547 aa).

A helical membrane pass occupies residues 3 to 23 (DITLAAVSIGLFFYVGARAVL). Residue cysteine 490 coordinates heme.

It belongs to the cytochrome P450 family. Heme is required as a cofactor.

It is found in the membrane. The catalysed reaction is isomotiol + reduced [NADPH--hemoprotein reductase] + O2 = 2alpha-hydroxyisomotiol + oxidized [NADPH--hemoprotein reductase] + H2O + H(+). Its pathway is secondary metabolite biosynthesis; terpenoid biosynthesis. Its function is as follows. Cytochrome P450 monooxygenase; part of the gene cluster that mediates the biosynthesis of the enfumafungin-type antibiotic, fuscoatroside. Within the pathway, fsoD catalyzes the hydroxylation at position C2 of isomotiol to produce 2-alpha-hydroxy-isomotiol. FsoD may also hydroxylate the intermediates 3-O-(beta-D-glucopyranosyl)-isomotiol and 2-deacetoxy-fuscoatroside at the same position C2. The fuscoatroside biosynthesis is initiated by the cyclization of 2,3(S)-oxidosqualene through FsoA's terpene cyclase (TC) domain, leading to the formation of the fernane skeleton isomotiol, harboring a fernane triterpene skeleton with a C8-C9 double bond. Subsequently, C2-alpha-hydroxylation mediated by fsoD results in the production of 2-alpha-hydroxy-isomotiol, which is further acetylated by fsoF. The glycosyltransferase (GT) domain of FsoA may convert isomotiol, 2-alpha-hydroxy-isomotiol, and the acetylated derivative of 2-alpha-hydroxy-isomotiol into their corresponding glycosides 3-O-(beta-D-glucopyranosyl)-isomotiol, 3-O-(beta-D-glucopyranosyl)-2-alpha-hydroxy-isomotiol, and 3-O-(beta-D-glucopyranosyl)-2-alpha-acetoxy-isomotiol, which then undergo oxidative cleavage under the action of fsoE to form s 2-deacetoxy-fuscoatroside, 2-deacetyl-fuscoatroside, and fuscoatroside, respectively. Although hydroxylation followed by acetylation of 3-O-(beta-D-glucopyranosyl)-isomotiol and 2-deacetoxy-fuscoatroside by fsoD and fsoF could not be ruled out, this process is likely to occur with difficulty due to bulky steric hindrance caused by the presence of a glycan at C3 in these compounds. Interestingly, fsoE can also utilize the aglycones isomotiol and 2-alpha-hydroxy-isomotiol as substrates to generate 19-beta-hydroxy-isomotiol and 2-alpha,19-beta-dihydroxy-isomotiol, respectively. These reactions occur with lower efficiency. Finally, fsoE can further convert 2-alpha,19-beta-dihydroxy-isomotiol into 2-alpha-hydroxy-ismotiol-19-one and 2-alpha-hydroxy-ismotiol-19-one into 2-deacetyl-3-deglucopyranosyl-fuscoatroside. The chain is Cytochrome P450 monooxygenase fsoD from Humicola fuscoatra.